Consider the following 864-residue polypeptide: Carbohydrate-responsive element-binding protein (864 aa).

Disordered stretches follow at residues 15 to 41 and 53 to 77; these read PRVV…AGGL and MVSS…LADF. A phosphoserine mark is found at Ser-20, Ser-23, and Ser-25. Thr-27 is subject to Phosphothreonine. A Phosphoserine modification is found at Ser-196. Disordered stretches follow at residues 332-397, 449-468, 489-533, 547-570, and 583-602; these read SSGI…APGP, PGVS…QPGP, PHFT…TARD, PEQA…PQDT, and PIPA…LAPP. A compositionally biased stretch (polar residues) spans 351–368; it reads GMTPHSGNTRLQARNSCS. Over residues 513–531 the composition is skewed to low complexity; it reads ASPPTLASATASPTATATA. A Phosphoserine; by AMPK modification is found at Ser-566. A compositionally biased stretch (pro residues) spans 583 to 596; sequence PIPAPTPPRPPPGP. 3 positions are modified to phosphoserine: Ser-614, Ser-626, and Ser-643. In terms of domain architecture, bHLH spans 661–715; it reads NRRITHISAEQKRRFNIKLGFDTLHGLVSTLSAQPSLKVSKATTLQKTAEYILML. Positions 715 to 736 are leucine-zipper; it reads LQQERAAMQEEAQQLRDEIEEL.

As to quaternary structure, binds DNA as a heterodimer with TCFL4/MLX. In terms of processing, phosphorylation at Ser-566 by AMPK inactivates the DNA-binding activity. In terms of tissue distribution, expressed in the ventricular and intermediate zones of the developing spinal cord of 12.5 dpc embryos. In later embryos expressed in a variety of tissues.

It is found in the nucleus. Its function is as follows. Transcriptional repressor. Binds to the canonical and non-canonical E box sequences 5'-CACGTG-3'. The protein is Carbohydrate-responsive element-binding protein (Mlxipl) of Mus musculus (Mouse).